The chain runs to 61 residues: UPF0434 protein PSPA7_2181 (61 aa).

The protein belongs to the UPF0434 family.

This chain is UPF0434 protein PSPA7_2181, found in Pseudomonas paraeruginosa (strain DSM 24068 / PA7) (Pseudomonas aeruginosa (strain PA7)).